The following is a 70-amino-acid chain: MWFEILPGLAVMGVCLVIPGVATAYIHKYTNGGKEKRVGRLRYQWYLMERDRRVSGVNRYYVSRGLENID.

Residues 1–21 form a helical membrane-spanning segment; sequence MWFEILPGLAVMGVCLVIPGV.

This sequence belongs to the complex I NDUFA1 subunit family. As to quaternary structure, complex I is composed of 45 different subunits.

It localises to the mitochondrion inner membrane. Accessory subunit of the mitochondrial membrane respiratory chain NADH dehydrogenase (Complex I), that is believed not to be involved in catalysis. Complex I functions in the transfer of electrons from NADH to the respiratory chain. The immediate electron acceptor for the enzyme is believed to be ubiquinone. The polypeptide is NADH dehydrogenase [ubiquinone] 1 alpha subcomplex subunit 1 (NDUFA1) (Cricetulus griseus (Chinese hamster)).